Here is a 248-residue protein sequence, read N- to C-terminus: Mannose-binding protein C (248 aa).

Residues 1 to 20 form the signal peptide; sequence MSLIPSLSLLLMSMVAASYS. One can recognise a Collagen-like domain in the interval 42 to 99; that stretch reads GINGFPGKDGRDGTKGEKGEPGQGLRGLQGPPGKLGPPGNPGPSGSPGPKGQKGDPGK. A disordered region spans residues 43–107; that stretch reads INGFPGKDGR…GKSPDCDSSL (65 aa). P47 carries the 4-hydroxyproline modification. Basic and acidic residues predominate over residues 49 to 61; it reads KDGRDGTKGEKGE. P73, P79, P82, and P88 each carry 4-hydroxyproline. Pro residues predominate over residues 75-87; the sequence is KLGPPGNPGPSGS. Basic and acidic residues predominate over residues 93-102; it reads QKGDPGKSPD. The stretch at 112 to 130 forms a coiled coil; the sequence is RKALQTEMARIKKWLTFSL. The C-type lectin domain occupies 134–245; it reads VGNKFFLTNG…CSSSHLAVCE (112 aa). Intrachain disulfides connect C155–C244 and C222–C236.

Oligomeric complex of 3 or more homotrimers. Interacts with MASP1 and MASP2. Interacts with MEP1A and MEP1B and may inhibit their catalytic activity. Hydroxylation on proline residues within the sequence motif, GXPG, is most likely to be 4-hydroxy as this fits the requirement for 4-hydroxylation in vertebrates.

The protein resides in the secreted. In terms of biological role, calcium-dependent lectin involved in innate immune defense. Binds mannose, fucose and N-acetylglucosamine on different microorganisms and activates the lectin complement pathway. Binds to late apoptotic cells, as well as to apoptotic blebs and to necrotic cells, but not to early apoptotic cells, facilitating their uptake by macrophages. This chain is Mannose-binding protein C (MBL2), found in Hylobates lar (Lar gibbon).